The chain runs to 249 residues: Type-1Aa cytolytic delta-endotoxin (249 aa).

This sequence belongs to the cyt1/cyt2 endotoxin family. Active after proteolytic processing.

Its function is as follows. Kills the larvae of dipteran insects by making pores in the epithelial cell membrane of the insect midgut. Acts on mosquitos and black flies. The protein is Type-1Aa cytolytic delta-endotoxin (cyt1Aa) of Bacillus thuringiensis subsp. morrisoni.